The sequence spans 343 residues: Heme A synthase (343 aa).

Helical transmembrane passes span 13–33 (VALWLFVVAVLVFAMVVVGGA), 96–116 (HRLLGRLVGVVFAIPFVFFLI), 130–150 (VLLGLGGLQGVVGWWMVSSGL), 165–185 (LGLALALFVFVIWTALDAWAG), 197–217 (GWALAFLGAVFFQSLLGALVA), 258–278 (LHHRLMAYALFVAAIVAGVAA), 290–310 (LTAFVLVGVVCLQAGLGIWTL), and 311–331 (MTAVPLALGVLHQAGAAILLA). Residue His260 coordinates heme. His322 is a heme binding site.

This sequence belongs to the COX15/CtaA family. Type 2 subfamily. In terms of assembly, interacts with CtaB. Requires heme b as cofactor.

The protein resides in the cell membrane. It carries out the reaction Fe(II)-heme o + 2 A + H2O = Fe(II)-heme a + 2 AH2. Its pathway is porphyrin-containing compound metabolism; heme A biosynthesis; heme A from heme O: step 1/1. Its function is as follows. Catalyzes the conversion of heme O to heme A by two successive hydroxylations of the methyl group at C8. The first hydroxylation forms heme I, the second hydroxylation results in an unstable dihydroxymethyl group, which spontaneously dehydrates, resulting in the formyl group of heme A. This chain is Heme A synthase, found in Caulobacter sp. (strain K31).